Here is a 418-residue protein sequence, read N- to C-terminus: MPGYYLWTIGCQMNQAESDRLGRLFELWGYSLADKAEDAELVLVNSCVVREHAENKVVNRLHLLRSLKNKNPKLKIALTGCLVGQDISLIKKKFPFVDYIFGPGSMPDWREIPEGFILPLRPPVSANVTIMQGCNNFCTYCVVPYRRGREKSRSIAEIGCEVAELVRRGSREVVLLGQNVDSYGHDLPEKPCLADLLSALHDITGLLRIRFLTSHPKDISQKLIDAMAHLPKVCRSLSLPVQSGDDTILASMRRGYTNQQYRELVERIKTAMPDISLQTDLIVGFPSENEEQFNQSYKLMADIGYDAIHVAAYSPRPQTVAARDMADDVPVIEKKRRLKLIEDLQKETVGKANAALMDTFAEVLVEGLQKNKWQGRTLGGKLVFLESDLPLEGCLVKVKIFKTSPWSLQAKLVNILES.

The MTTase N-terminal domain maps to 2-118 (PGYYLWTIGC…WREIPEGFIL (117 aa)). The [4Fe-4S] cluster site is built by Cys-11, Cys-47, Cys-81, Cys-134, Cys-138, and Cys-141. Residues 120 to 351 (LRPPVSANVT…EDLQKETVGK (232 aa)) enclose the Radical SAM core domain. Positions 346–414 (KETVGKANAA…PWSLQAKLVN (69 aa)) constitute a TRAM domain.

Belongs to the methylthiotransferase family. MiaB subfamily. In terms of assembly, monomer. [4Fe-4S] cluster is required as a cofactor.

Its subcellular location is the cytoplasm. It carries out the reaction N(6)-dimethylallyladenosine(37) in tRNA + (sulfur carrier)-SH + AH2 + 2 S-adenosyl-L-methionine = 2-methylsulfanyl-N(6)-dimethylallyladenosine(37) in tRNA + (sulfur carrier)-H + 5'-deoxyadenosine + L-methionine + A + S-adenosyl-L-homocysteine + 2 H(+). Functionally, catalyzes the methylthiolation of N6-(dimethylallyl)adenosine (i(6)A), leading to the formation of 2-methylthio-N6-(dimethylallyl)adenosine (ms(2)i(6)A) at position 37 in tRNAs that read codons beginning with uridine. The sequence is that of tRNA-2-methylthio-N(6)-dimethylallyladenosine synthase from Dehalococcoides mccartyi (strain CBDB1).